Consider the following 343-residue polypeptide: Holliday junction branch migration complex subunit RuvB (343 aa).

The segment at 1–185 (MEQEDFNIRE…FGINLHLEYY (185 aa)) is large ATPase domain (RuvB-L). ATP is bound by residues Leu24, Arg25, Gly66, Lys69, Thr70, Thr71, 132–134 (EDY), Arg175, Tyr185, and Arg222. Thr70 contacts Mg(2+). Residues 186-256 (DDDILSNIIR…IAQFALEALN (71 aa)) form a small ATPAse domain (RuvB-S) region. The interval 259-343 (KYGLDEIDNK…YSSQKTLFND (85 aa)) is head domain (RuvB-H). Residues Arg314 and Arg319 each contribute to the DNA site.

This sequence belongs to the RuvB family. As to quaternary structure, homohexamer. Forms an RuvA(8)-RuvB(12)-Holliday junction (HJ) complex. HJ DNA is sandwiched between 2 RuvA tetramers; dsDNA enters through RuvA and exits via RuvB. An RuvB hexamer assembles on each DNA strand where it exits the tetramer. Each RuvB hexamer is contacted by two RuvA subunits (via domain III) on 2 adjacent RuvB subunits; this complex drives branch migration. In the full resolvosome a probable DNA-RuvA(4)-RuvB(12)-RuvC(2) complex forms which resolves the HJ.

The protein resides in the cytoplasm. The enzyme catalyses ATP + H2O = ADP + phosphate + H(+). Functionally, the RuvA-RuvB-RuvC complex processes Holliday junction (HJ) DNA during genetic recombination and DNA repair, while the RuvA-RuvB complex plays an important role in the rescue of blocked DNA replication forks via replication fork reversal (RFR). RuvA specifically binds to HJ cruciform DNA, conferring on it an open structure. The RuvB hexamer acts as an ATP-dependent pump, pulling dsDNA into and through the RuvAB complex. RuvB forms 2 homohexamers on either side of HJ DNA bound by 1 or 2 RuvA tetramers; 4 subunits per hexamer contact DNA at a time. Coordinated motions by a converter formed by DNA-disengaged RuvB subunits stimulates ATP hydrolysis and nucleotide exchange. Immobilization of the converter enables RuvB to convert the ATP-contained energy into a lever motion, pulling 2 nucleotides of DNA out of the RuvA tetramer per ATP hydrolyzed, thus driving DNA branch migration. The RuvB motors rotate together with the DNA substrate, which together with the progressing nucleotide cycle form the mechanistic basis for DNA recombination by continuous HJ branch migration. Branch migration allows RuvC to scan DNA until it finds its consensus sequence, where it cleaves and resolves cruciform DNA. In Bacteroides thetaiotaomicron (strain ATCC 29148 / DSM 2079 / JCM 5827 / CCUG 10774 / NCTC 10582 / VPI-5482 / E50), this protein is Holliday junction branch migration complex subunit RuvB.